The sequence spans 316 residues: Prenytransferase adrG (316 aa).

7 consecutive transmembrane segments (helical) span residues 36–56 (LLGF…CASI), 60–80 (KIPI…SIFL), 131–151 (VLIY…FFAL), 163–183 (PQIT…SLGL), 191–211 (PTVC…VIYS), 247–267 (GFLA…VVSV), and 294–314 (KSAF…EYCL).

This sequence belongs to the UbiA prenyltransferase family. Requires Mg(2+) as cofactor.

Its subcellular location is the membrane. It carries out the reaction 3,5-dimethylorsellinate + (2E,6E)-farnesyl diphosphate = (3R)-3-farnesyl-6-hydroxy-2,3,5-trimethyl-4-oxocyclohexa-1,5-diene-1-carboxylate + diphosphate + H(+). Its pathway is secondary metabolite biosynthesis; terpenoid biosynthesis. Functionally, prenytransferase; part of the gene cluster that mediates the biosynthesis of andrastins, meroterpenoid compounds that exhibit inhibitory activity against ras farnesyltransferase, suggesting that they could be promising leads for antitumor agents. The first step of the pathway is the synthesis of 3,5-dimethylorsellinic acid (DMOA) by the polyketide synthase adrD via condensation of one acetyl-CoA starter unit with 3 malonyl-CoA units and 2 methylations. DMAO is then converted to farnesyl-DMAO by the prenyltransferase adrG. The methyltransferase adrK catalyzes the methylation of the carboxyl group of farnesyl-DMAO to farnesyl-DMAO methyl ester which is further converted to epoxyfarnesyl-DMAO methyl ester by the FAD-dependent monooxygenase adrH. The terpene cyclase adrI then catalyzes the carbon skeletal rearrangement to generate the andrastin E, the first compound in the pathway having the andrastin scaffold, with the tetracyclic ring system. The post-cyclization tailoring enzymes adrF, adrE, adrJ, and adrA, are involved in the conversion of andrastin E into andrastin A. The short chain dehydrogenase adrF is responsible for the oxidation of the C-3 a hydroxyl group of andrastin E to yield the corresponding ketone, andrastin D. The ketoreductase adrE stereoselectively reduces the carbonyl moiety to reverse the stereochemistry of the C-3 position to yield andrastin F. The acetyltransferase adrJ is the acetyltransferase that attaches the acetyl group to the C-3 hydroxyl group of andrastin F to yield andrastin C. Finally, the cytochrome P450 monooxygenase adrA catalyzes two sequential oxidation reactions of the C-23 methyl group, to generate the corresponding alcohol andrastin B, and aldehyde andrastin A. This chain is Prenytransferase adrG, found in Penicillium roqueforti.